Consider the following 1536-residue polypeptide: Ferredoxin-dependent glutamate synthase (1536 aa).

The For GATase activity role is filled by cysteine 27. The Glutamine amidotransferase type-2 domain maps to 27 to 427 (CGVGFIANLN…PGQMLCVDLS (401 aa)). 1105–1162 (LAEVHTTLVENSLREKVILRVDGGLRTGKDIIIAALMGAEEFGFGTVAMIATGCVMAR) contacts FMN. Residues cysteine 1158, cysteine 1164, and cysteine 1169 each contribute to the [3Fe-4S] cluster site.

The protein belongs to the glutamate synthase family. As to quaternary structure, monomer. It depends on [3Fe-4S] cluster as a cofactor. Requires FAD as cofactor. The cofactor is FMN.

It is found in the plastid. Its subcellular location is the chloroplast stroma. It catalyses the reaction 2 oxidized [2Fe-2S]-[ferredoxin] + 2 L-glutamate = L-glutamine + 2 reduced [2Fe-2S]-[ferredoxin] + 2-oxoglutarate + 2 H(+). Its pathway is amino-acid biosynthesis; L-glutamate biosynthesis via GLT pathway; L-glutamate from 2-oxoglutarate and L-glutamine (ferredoxin route): step 1/1. It functions in the pathway energy metabolism; nitrogen metabolism. This is Ferredoxin-dependent glutamate synthase (gltB) from Antithamnion sp. (Red alga).